A 279-amino-acid polypeptide reads, in one-letter code: Thymidylate synthase (279 aa).

133 to 134 lines the dUMP pocket; sequence RR. The Nucleophile role is filled by C154. DUMP is bound by residues 178–181, N189, and 219–221; these read RSND and HIY. D181 serves as a coordination point for (6R)-5,10-methylene-5,6,7,8-tetrahydrofolate. Residue A278 participates in (6R)-5,10-methylene-5,6,7,8-tetrahydrofolate binding.

This sequence belongs to the thymidylate synthase family. Bacterial-type ThyA subfamily. Homodimer.

It localises to the cytoplasm. The enzyme catalyses dUMP + (6R)-5,10-methylene-5,6,7,8-tetrahydrofolate = 7,8-dihydrofolate + dTMP. It functions in the pathway pyrimidine metabolism; dTTP biosynthesis. Functionally, catalyzes the reductive methylation of 2'-deoxyuridine-5'-monophosphate (dUMP) to 2'-deoxythymidine-5'-monophosphate (dTMP) while utilizing 5,10-methylenetetrahydrofolate (mTHF) as the methyl donor and reductant in the reaction, yielding dihydrofolate (DHF) as a by-product. This enzymatic reaction provides an intracellular de novo source of dTMP, an essential precursor for DNA biosynthesis. This Streptococcus sanguinis (strain SK36) protein is Thymidylate synthase.